A 55-amino-acid chain; its full sequence is ATP synthase protein 8 (55 aa).

Residues 4–24 (LDPAPWFSMLTVSWLIIFLLI) traverse the membrane as a helical segment.

This sequence belongs to the ATPase protein 8 family. F-type ATPases have 2 components, CF(1) - the catalytic core - and CF(0) - the membrane proton channel.

The protein resides in the mitochondrion membrane. Mitochondrial membrane ATP synthase (F(1)F(0) ATP synthase or Complex V) produces ATP from ADP in the presence of a proton gradient across the membrane which is generated by electron transport complexes of the respiratory chain. F-type ATPases consist of two structural domains, F(1) - containing the extramembraneous catalytic core and F(0) - containing the membrane proton channel, linked together by a central stalk and a peripheral stalk. During catalysis, ATP synthesis in the catalytic domain of F(1) is coupled via a rotary mechanism of the central stalk subunits to proton translocation. Part of the complex F(0) domain. Minor subunit located with subunit a in the membrane. The protein is ATP synthase protein 8 (MT-ATP8) of Petromyzon marinus (Sea lamprey).